A 146-amino-acid polypeptide reads, in one-letter code: Transcription initiation factor TFIID subunit 10b (146 aa).

Residues 16–43 (GASSHGQSSGGGGGGDRDRTTPSSHLSD) form a disordered region.

Belongs to the TAF10 family. As to quaternary structure, belongs to the TFIID complex which is composed of TATA binding protein (Tbp) and a number of TBP-associated factors (TAFs). The N-terminus interacts with the histone fold of Taf8. As to expression, at embryonic stage 9, expression is seen in the mesodermal layer and midgut primordia. The mesoderm-specific expression persists in later stages of development and at its highest level is detected in midgut, hindgut, and differentiating somatic muscle fibers. Coexpressed with Taf10 in the lateral epidermis and anal plate.

It localises to the cytoplasm. The protein localises to the nucleus. In terms of biological role, TFIID is a multimeric protein complex that plays a central role in mediating promoter responses to various activators and repressors. In Drosophila melanogaster (Fruit fly), this protein is Transcription initiation factor TFIID subunit 10b.